The sequence spans 493 residues: MHTLVFLSTRQVLQCQPAACQALPLLPRELFPLLFKVAFMDKKTVVLRELVHTWPFPLLSFQQLLQECAHCSRALLQERPSTESMQAVILGLTARLHTSEPGASTQPLCRKHALRVLDMTGLLDDGVEQDPGTMSMWDCTAAVARTCIAQQQGGAAEPGPAPIPVEVRVDLRVNRASYAFLREALRSSVGSPLRLCCRDLRAEDLPMRNTVALLQLLDAGCLRRVDLRFNNLGLRGLSVIIPHVARFQHLASLRLHYVHGDSRQPSVDGEDNFRYFLAQMGRFTCLRELSMGSSLLSGRLDQLLSTLQSPLESLELAFCALLPEDLRFLARSPHAAHLKKLDLSGNDLSGSQLAPFQGLLQASAATLLHLELTECQLADTQLLATLPILTQCASLRYLGLYGNPLSMAGLKELLRDSVAQAELRTVVHPFPVDCYEGLPWPPPASVLLEASINEEKFARVEAELHQLLLASGRAHVLWTTDIYGRLAADYFSL.

The stretch at 111-146 (KHALRVLDMTGLLDDGVEQDPGTMSMWDCTAAVART) is one LRR 1; degenerate repeat. One copy of the LRR 2; degenerate repeat lies at 194–218 (RLCCRDLRAEDLPMRNTVALLQLLD). The LRR 3; degenerate repeat unit spans residues 219–246 (AGCLRRVDLRFNNLGLRGLSVIIPHVAR). One copy of the LRR 4; degenerate repeat lies at 247–282 (FQHLASLRLHYVHGDSRQPSVDGEDNFRYFLAQMGR). LRR repeat units follow at residues 283–307 (FTCLRELSMGSSLLSGRLDQLLSTL), 308–339 (QSPLESLELAFCALLPEDLRFLARSPHAAHLK), 340–360 (KLDLSGNDLSGSQLAPFQGLL), 364–391 (AATLLHLELTECQLADTQLLATLPILTQ), and 392–416 (CASLRYLGLYGNPLSMAGLKELLRD).

This sequence belongs to the PRAME family. LRRC14 subfamily. Interacts with IKBKB; disrupts IKBKB-IKBKG interaction preventing I-kappa-B-kinase (IKK) core complex formation and leading to a decrease of IKBKB phosphorylation and NF-kappaB activation. Interacts with CHUK.

Its subcellular location is the cytoplasm. In terms of biological role, negatively regulates Toll-like receptor-mediated NF-kappa-B signaling by disrupting IKK core complex formation through interaction with IKBKB. The protein is Leucine-rich repeat-containing protein 14 of Homo sapiens (Human).